The following is a 78-amino-acid chain: Large ribosomal subunit protein eL20 (78 aa).

This sequence belongs to the eukaryotic ribosomal protein eL20 family. Part of the 50S ribosomal subunit. Binds 23S rRNA.

The protein is Large ribosomal subunit protein eL20 of Pyrobaculum aerophilum (strain ATCC 51768 / DSM 7523 / JCM 9630 / CIP 104966 / NBRC 100827 / IM2).